Reading from the N-terminus, the 380-residue chain is Heme A synthase (380 aa).

8 consecutive transmembrane segments (helical) span residues 36–56 (IRAWLAVLFALVVAMIVVGGL), 125–145 (VIGLVWALGFFGFLLARKIPA), 151–171 (LILPGVLGGVQGAVGAWMVAS), 187–207 (LATHLGLAFVILGLLAWSILQ), 227–247 (FGLATGWLHLAFLQILIGALV), 287–307 (LVQFIHRIVGYLLLAYGVMVW), 320–340 (FAFNAGFAALSLQVVLGIVTV), and 344–364 (APWQIAILHQLLAVGVFVLIL). Residue H292 participates in heme binding. A heme-binding site is contributed by H352.

Belongs to the COX15/CtaA family. Type 2 subfamily. Interacts with CtaB. Heme b serves as cofactor.

It localises to the cell membrane. The catalysed reaction is Fe(II)-heme o + 2 A + H2O = Fe(II)-heme a + 2 AH2. It participates in porphyrin-containing compound metabolism; heme A biosynthesis; heme A from heme O: step 1/1. In terms of biological role, catalyzes the conversion of heme O to heme A by two successive hydroxylations of the methyl group at C8. The first hydroxylation forms heme I, the second hydroxylation results in an unstable dihydroxymethyl group, which spontaneously dehydrates, resulting in the formyl group of heme A. The sequence is that of Heme A synthase from Ruegeria pomeroyi (strain ATCC 700808 / DSM 15171 / DSS-3) (Silicibacter pomeroyi).